The chain runs to 499 residues: uncharacterized protein (499 aa).

FAD contacts are provided by residues 6–35 (EAVI…VIER) and 272–282 (YRDGRIFLAGD).

Belongs to the PheA/TfdB FAD monooxygenase family. It depends on FAD as a cofactor.

This is an uncharacterized protein from Bacillus subtilis (strain 168).